Consider the following 552-residue polypeptide: MSAQNGYEWQQTERDVWTRTCLGHEAAASFNENIAYGHTELSVTATFRVHHPASSGIAGTDQEQEDLVARVRDAWIRTRYLRPEVAVEMTTHTDASIPQAFTYRVLRDEVSLRRWVDQTMAVVRLGEPGAESLEEVCAYTYNRALPTPGKQSMLYLVLPRLADEKDRNAHFVWNVSHALADGGSISELYNVLLQAMIDASPSTDGSVYIPSDQELDVLPLLPRSVVAAYRQQHKPSAADEEAAAETARDNLRLIQAKMNESLALQPVTNWTTRKHETICIRRDIEADEARELIKFGKHIKSGVTYLASAATVLATAETFPERKASSTGALMGMVRNARRWLSTEPVEGATGNRTPLGSDAVFLWIPVDTQKSLEPSFDGVPELVSVAARIRSELNKHLVSPHCISSYPVVAEFAQGALTNHWAEIEGANRSAHTPNAEELSKIIGPQAPGFSSVGALQVHSRFEPASPSARASGLWLERTDSAHRGRQVNASPWISMLMIDGKIKLQLGFDAKFHDADKMEQWMQRTYEWLLVCAAAASSSVGTVAPISARL.

The protein belongs to the trichothecene O-acetyltransferase family.

It participates in secondary metabolite biosynthesis. Functionally, acyl-CoA-dependent acyltransferase; part of the gene cluster that mediates the biosynthesis of mannosylerythritol lipids (MELs), surface-active substances that enhance the availability of water-insoluble substrates. Depending on the number of acetyl groups, mannosylerythritol lipids can be differentiated into MEL A (fully acetylated), MEL B and MEL C (monoacetylated at R-6 and R-4, respectively), and the fully deacetylated MEL D. The first step in the pathway is the generation of mannosylerythritol by the glycosyltransferase EMT1 which catalyzes the transfer of GDP-mannose to the C-4 atom of meso-erythritol. This reaction has to be stereospecific, since only mannosyl-D-erythritol is generated. The produced disaccharide is subsequently acylated with fatty acids of various lengths by the acyltransferases MAC1 and MAC2 at positions C-2 and C-3, repectively. The existence of MEL derivatives which carry an acetyl group at C-2 implies that at least MAC1 also accepts acetyl-CoA as a donor. The final step of MEL biosynthesis is the acetylation of the fully acylated mannosylerythritol lipids catalyzed by the acetyl-CoA-dependent acetyltransferase MAT1. MAT1 displays a relaxed regioselectivity and is able to transfer acetylgroups to both positions C-4 and C-6 of the mannosyl moiety. This Pseudozyma antarctica (strain T-34) (Yeast) protein is Acyl-CoA-dependent acyltransferase MAC1.